Consider the following 234-residue polypeptide: Proteasome subunit alpha type-2 (234 aa).

Belongs to the peptidase T1A family. The 26S proteasome consists of a 20S proteasome core and two 19S regulatory subunits. The 20S proteasome core is composed of 28 subunits that are arranged in four stacked rings, resulting in a barrel-shaped structure. The two end rings are each formed by seven alpha subunits, and the two central rings are each formed by seven beta subunits. The catalytic chamber with the active sites is on the inside of the barrel. Interacts with Rpn6.

It is found in the cytoplasm. The protein resides in the nucleus. In terms of biological role, the proteasome is a multicatalytic proteinase complex which is characterized by its ability to cleave peptides with Arg, Phe, Tyr, Leu, and Glu adjacent to the leaving group at neutral or slightly basic pH. The proteasome has an ATP-dependent proteolytic activity. This Drosophila melanogaster (Fruit fly) protein is Proteasome subunit alpha type-2 (Prosalpha2).